Consider the following 94-residue polypeptide: Pyrimidine/purine nucleoside phosphorylase (94 aa).

This sequence belongs to the nucleoside phosphorylase PpnP family.

The catalysed reaction is a purine D-ribonucleoside + phosphate = a purine nucleobase + alpha-D-ribose 1-phosphate. It carries out the reaction adenosine + phosphate = alpha-D-ribose 1-phosphate + adenine. The enzyme catalyses cytidine + phosphate = cytosine + alpha-D-ribose 1-phosphate. It catalyses the reaction guanosine + phosphate = alpha-D-ribose 1-phosphate + guanine. The catalysed reaction is inosine + phosphate = alpha-D-ribose 1-phosphate + hypoxanthine. It carries out the reaction thymidine + phosphate = 2-deoxy-alpha-D-ribose 1-phosphate + thymine. The enzyme catalyses uridine + phosphate = alpha-D-ribose 1-phosphate + uracil. It catalyses the reaction xanthosine + phosphate = alpha-D-ribose 1-phosphate + xanthine. Catalyzes the phosphorolysis of diverse nucleosides, yielding D-ribose 1-phosphate and the respective free bases. Can use uridine, adenosine, guanosine, cytidine, thymidine, inosine and xanthosine as substrates. Also catalyzes the reverse reactions. This is Pyrimidine/purine nucleoside phosphorylase from Pseudomonas fluorescens (strain Pf0-1).